Reading from the N-terminus, the 410-residue chain is D-3-phosphoglycerate dehydrogenase (410 aa).

Residues 162-163 (HI), D182, 239-241 (AAR), and D265 contribute to the NAD(+) site. Residue R241 is part of the active site. Residue E270 is part of the active site. H293 serves as the catalytic Proton donor. 293 to 296 (HIGG) contacts NAD(+). Residues 341–410 (RLLHIHENRP…DGTIRARVLY (70 aa)) form the ACT domain.

This sequence belongs to the D-isomer specific 2-hydroxyacid dehydrogenase family.

The enzyme catalyses (2R)-3-phosphoglycerate + NAD(+) = 3-phosphooxypyruvate + NADH + H(+). The catalysed reaction is (R)-2-hydroxyglutarate + NAD(+) = 2-oxoglutarate + NADH + H(+). Its pathway is amino-acid biosynthesis; L-serine biosynthesis; L-serine from 3-phospho-D-glycerate: step 1/3. In bacteria displays feedback inhibition by L-serine. Its function is as follows. Catalyzes the reversible oxidation of 3-phospho-D-glycerate to 3-phosphonooxypyruvate, the first step of the phosphorylated L-serine biosynthesis pathway. Also catalyzes the reversible oxidation of 2-hydroxyglutarate to 2-oxoglutarate. The protein is D-3-phosphoglycerate dehydrogenase (serA) of Haemophilus influenzae (strain ATCC 51907 / DSM 11121 / KW20 / Rd).